Reading from the N-terminus, the 71-residue chain is Translation initiation factor IF-1 (71 aa).

Residues 1 to 71 enclose the S1-like domain; sequence MSKDDLIQFT…LTKGRVIHRH (71 aa).

It belongs to the IF-1 family. Component of the 30S ribosomal translation pre-initiation complex which assembles on the 30S ribosome in the order IF-2 and IF-3, IF-1 and N-formylmethionyl-tRNA(fMet); mRNA recruitment can occur at any time during PIC assembly.

It localises to the cytoplasm. Functionally, one of the essential components for the initiation of protein synthesis. Stabilizes the binding of IF-2 and IF-3 on the 30S subunit to which N-formylmethionyl-tRNA(fMet) subsequently binds. Helps modulate mRNA selection, yielding the 30S pre-initiation complex (PIC). Upon addition of the 50S ribosomal subunit IF-1, IF-2 and IF-3 are released leaving the mature 70S translation initiation complex. This Rickettsia felis (strain ATCC VR-1525 / URRWXCal2) (Rickettsia azadi) protein is Translation initiation factor IF-1.